The following is a 270-amino-acid chain: 4-diphosphocytidyl-2-C-methyl-D-erythritol kinase (270 aa).

Lysine 8 is a catalytic residue. Residue 90-100 (PIGAGLGGGSS) participates in ATP binding. Aspartate 132 is a catalytic residue.

The protein belongs to the GHMP kinase family. IspE subfamily.

It carries out the reaction 4-CDP-2-C-methyl-D-erythritol + ATP = 4-CDP-2-C-methyl-D-erythritol 2-phosphate + ADP + H(+). The protein operates within isoprenoid biosynthesis; isopentenyl diphosphate biosynthesis via DXP pathway; isopentenyl diphosphate from 1-deoxy-D-xylulose 5-phosphate: step 3/6. Catalyzes the phosphorylation of the position 2 hydroxy group of 4-diphosphocytidyl-2C-methyl-D-erythritol. This Cytophaga hutchinsonii (strain ATCC 33406 / DSM 1761 / CIP 103989 / NBRC 15051 / NCIMB 9469 / D465) protein is 4-diphosphocytidyl-2-C-methyl-D-erythritol kinase.